The chain runs to 215 residues: Orotidine 5'-phosphate decarboxylase (215 aa).

Substrate is bound by residues Asp12, Lys34, 60–69 (DFKVADIPNT), Ser117, 170–180 (PGVGAQGGSAA), Gly193, and Arg194. Residue Lys62 is the Proton donor of the active site.

It belongs to the OMP decarboxylase family. Type 1 subfamily. In terms of assembly, homodimer.

The enzyme catalyses orotidine 5'-phosphate + H(+) = UMP + CO2. It participates in pyrimidine metabolism; UMP biosynthesis via de novo pathway; UMP from orotate: step 2/2. In terms of biological role, catalyzes the decarboxylation of orotidine 5'-monophosphate (OMP) to uridine 5'-monophosphate (UMP). The protein is Orotidine 5'-phosphate decarboxylase of Methanococcoides burtonii (strain DSM 6242 / NBRC 107633 / OCM 468 / ACE-M).